Here is a 1594-residue protein sequence, read N- to C-terminus: Mucin-like protein (1594 aa).

At 1-1530 (DTTAGPDTTS…YETREDGLEM (1530 aa)) the chain is on the extracellular side. TSP type-1 domains lie at 141–196 (DGGF…GSCP), 198–253 (DGNF…PPCP), and 255–310 (DGNF…GPCP). Disulfide bonds link C153–C190, C157–C195, C168–C180, C210–C247, C214–C252, C225–C237, C267–C304, C271–C309, and C282–C294. Positions 400–566 (LTISDDAFEQ…GVWFFRLEMN (167 aa)) constitute an NIDO domain. In terms of domain architecture, AMOP spans 568–706 (ILSLAGKKCN…RSCFGYTLRR (139 aa)). The VWFD domain maps to 706 to 901 (RRGLIFGDPH…KWQINASQSL (196 aa)). EGF-like domains lie at 1063–1108 (LILL…QYCQ) and 1110–1156 (KIDA…SICE). Cystine bridges form between C1067/C1075, C1069/C1096, C1098/C1107, C1114/C1127, C1121/C1141, C1144/C1155, C1161/C1173, C1169/C1182, C1285/C1296, C1292/C1305, C1307/C1320, C1326/C1341, C1334/C1350, and C1352/C1363. The EGF-like 3; calcium-binding domain maps to 1157 to 1191 (DIDECSDANVSKCDHSCINLPGSYVCDCNQGFSLE). The region spanning 1281 to 1321 (DINECTTHRHKCSQICHNLDGSYTCSCQPGFNLSPDQTTCE) is the EGF-like 4; calcium-binding domain. Residues 1322-1364 (DIDECGLINEAHCEGSLEICINTMGSFRCECQDGFHRVNDTCQ) form the EGF-like 5; calcium-binding domain. The helical transmembrane segment at 1531–1551 (IWLLVGVSVAVAVPLMIVIVI) threads the bilayer. The Cytoplasmic portion of the chain corresponds to 1552–1593 (LYREYRRIAKQRRKTNNFDLRQWSGARERTIYSGFTNSKSAR).

In terms of tissue distribution, component of the acid-insoluble and acid-soluble organic matrix of the aragonitic skeleton (at protein level).

It is found in the membrane. The chain is Mucin-like protein from Acropora millepora (Staghorn coral).